We begin with the raw amino-acid sequence, 159 residues long: Protein RseC (159 aa).

Topologically, residues 1 to 72 (MIKEWATVVS…QKVELGIAEG (72 aa)) are cytoplasmic. A helical membrane pass occupies residues 73-95 (SLLSSALLVYMSPLVGLFLIASL). The Periplasmic segment spans residues 96-98 (FQL). A helical membrane pass occupies residues 99 to 121 (LFASDVAALCGAILGGIGGFLIA). Topologically, residues 122–159 (RGYSRKFAARAEWQPIILSVALPPGLVRFETSSEDASQ) are cytoplasmic.

The protein belongs to the RseC family.

The protein resides in the cell inner membrane. Its function is as follows. May play a role in reduction of the SoxR iron-sulfur cluster. May work together with the RsxABCDGE complex. This Escherichia coli (strain K12) protein is Protein RseC.